Here is a 188-residue protein sequence, read N- to C-terminus: MIASINNRTKLNFFHLLVTMFRIYPNNTTVPGCLVGDIIQVRYKDVSHIRFLSDYLSLMPNVAIVNEYGPNNQLVIKRKNKSLKSLQDLCLDKIAVSLKKPFRQLKSLNAVCLMRDIIFSLGLPIIFNPALLQRKVPQRSVGYFMNSKLERFANCDRGHVVEEKQLQSNLYIDYFCMICGLNVFKIKE.

This is an uncharacterized protein from Autographa californica nuclear polyhedrosis virus (AcMNPV).